The following is a 154-amino-acid chain: Jupiter microtubule associated homolog 1 (154 aa).

Methionine 1 carries the post-translational modification N-acetylmethionine. The segment covering methionine 1 to arginine 19 has biased composition (polar residues). The tract at residues methionine 1–glycine 154 is disordered. The residue at position 2 (threonine 2) is an N-acetylthreonine; in Hematological and neurological expressed 1 protein, N-terminally processed. Phosphoserine is present on residues serine 28 and serine 31. Threonine 54 is modified (phosphothreonine). Serine 71, serine 80, serine 87, serine 88, and serine 92 each carry phosphoserine. Polar residues predominate over residues serine 80–asparagine 91. Over residues leucine 96–valine 108 the composition is skewed to basic and acidic residues. Positions proline 125–valine 138 are enriched in pro residues. Position 131 is a phosphoserine (serine 131). Lysine 148 is subject to N6-acetyllysine.

It belongs to the JUPITER family. In terms of assembly, interacts with the complex composed, at least, of APC, CTNNB1 and GSK3B; the interaction takes place with the inactive form of GSK3B (phosphorylated at 'Ser-9').

The protein resides in the nucleus. It is found in the cytoplasm. In terms of biological role, modulates negatively AKT-mediated GSK3B signaling. Induces CTNNB1 'Ser-33' phosphorylation and degradation through the suppression of the inhibitory 'Ser-9' phosphorylation of GSK3B, which represses the function of the APC:CTNNB1:GSK3B complex and the interaction with CDH1/E-cadherin in adherent junctions. Plays a role in the regulation of cell cycle and cell adhesion. Has an inhibitory role on AR-signaling pathway through the induction of receptor proteasomal degradation. The chain is Jupiter microtubule associated homolog 1 from Bos taurus (Bovine).